The chain runs to 292 residues: BTB/POZ domain-containing protein KCTD7 (292 aa).

Residues 1 to 27 (MVVFSAASDSEKPGDAMSGADKGEEEY) form a disordered region. The BTB domain occupies 56-144 (IPLNVGGTYF…YAIGPLLENL (89 aa)).

It localises to the cell membrane. It is found in the cytoplasm. Its subcellular location is the cytosol. The sequence is that of BTB/POZ domain-containing protein KCTD7 (kctd7) from Danio rerio (Zebrafish).